A 59-amino-acid chain; its full sequence is uncharacterized protein (59 aa).

2 stretches are compositionally biased toward basic and acidic residues: residues 1–23 (MAEH…DAGR) and 36–45 (DPQRASEAGK). Residues 1–59 (MAEHRGGSGNFAEDREKASDAGRKGGQHSGGNFKNDPQRASEAGKKGGQQSGGNKSGKS) are disordered. Residues 46–59 (KGGQQSGGNKSGKS) show a composition bias toward gly residues.

This sequence belongs to the con-10 family.

This is an uncharacterized protein from Escherichia coli (strain K12).